A 367-amino-acid chain; its full sequence is Phosphoribosylaminoimidazole-succinocarboxamide synthase (367 aa).

Belongs to the SAICAR synthetase family.

The enzyme catalyses 5-amino-1-(5-phospho-D-ribosyl)imidazole-4-carboxylate + L-aspartate + ATP = (2S)-2-[5-amino-1-(5-phospho-beta-D-ribosyl)imidazole-4-carboxamido]succinate + ADP + phosphate + 2 H(+). It participates in purine metabolism; IMP biosynthesis via de novo pathway; 5-amino-1-(5-phospho-D-ribosyl)imidazole-4-carboxamide from 5-amino-1-(5-phospho-D-ribosyl)imidazole-4-carboxylate: step 1/2. The chain is Phosphoribosylaminoimidazole-succinocarboxamide synthase from Shewanella frigidimarina (strain NCIMB 400).